The following is a 91-amino-acid chain: DNA-directed RNA polymerase subunit omega (91 aa).

It belongs to the RNA polymerase subunit omega family. As to quaternary structure, the RNAP catalytic core consists of 2 alpha, 1 beta, 1 beta' and 1 omega subunit. When a sigma factor is associated with the core the holoenzyme is formed, which can initiate transcription.

It catalyses the reaction RNA(n) + a ribonucleoside 5'-triphosphate = RNA(n+1) + diphosphate. Promotes RNA polymerase assembly. Latches the N- and C-terminal regions of the beta' subunit thereby facilitating its interaction with the beta and alpha subunits. This is DNA-directed RNA polymerase subunit omega from Psychromonas ingrahamii (strain DSM 17664 / CCUG 51855 / 37).